A 248-amino-acid chain; its full sequence is Ubiquinone biosynthesis O-methyltransferase (248 aa).

The S-adenosyl-L-methionine site is built by Arg41, Gly72, Asp93, and Met136.

It belongs to the methyltransferase superfamily. UbiG/COQ3 family.

The enzyme catalyses a 3-demethylubiquinol + S-adenosyl-L-methionine = a ubiquinol + S-adenosyl-L-homocysteine + H(+). The catalysed reaction is a 3-(all-trans-polyprenyl)benzene-1,2-diol + S-adenosyl-L-methionine = a 2-methoxy-6-(all-trans-polyprenyl)phenol + S-adenosyl-L-homocysteine + H(+). Its pathway is cofactor biosynthesis; ubiquinone biosynthesis. O-methyltransferase that catalyzes the 2 O-methylation steps in the ubiquinone biosynthetic pathway. The sequence is that of Ubiquinone biosynthesis O-methyltransferase from Sinorhizobium medicae (strain WSM419) (Ensifer medicae).